Reading from the N-terminus, the 529-residue chain is Glucose-6-phosphate isomerase (529 aa).

The active-site Proton donor is the Glu-322. Catalysis depends on residues His-351 and Lys-455.

The protein belongs to the GPI family.

It is found in the cytoplasm. The enzyme catalyses alpha-D-glucose 6-phosphate = beta-D-fructose 6-phosphate. The protein operates within carbohydrate biosynthesis; gluconeogenesis. It functions in the pathway carbohydrate degradation; glycolysis; D-glyceraldehyde 3-phosphate and glycerone phosphate from D-glucose: step 2/4. Catalyzes the reversible isomerization of glucose-6-phosphate to fructose-6-phosphate. In Acaryochloris marina (strain MBIC 11017), this protein is Glucose-6-phosphate isomerase.